Reading from the N-terminus, the 64-residue chain is Large ribosomal subunit protein bL35 (64 aa).

Basic residues predominate over residues 1 to 22 (MPKMKSHTGMGKRVRVTGKGKI). The tract at residues 1–28 (MPKMKSHTGMGKRVRVTGKGKIVKQQAG) is disordered.

The protein belongs to the bacterial ribosomal protein bL35 family.

This Salinispora tropica (strain ATCC BAA-916 / DSM 44818 / JCM 13857 / NBRC 105044 / CNB-440) protein is Large ribosomal subunit protein bL35.